The sequence spans 466 residues: MVLLSENASEGSNCTHPPAPVNISKAILLGVILGGLIIFGVLGNILVILSVACHRHLHSVTHYYIVNLAVADLLLTSTVLPFSAIFEILGYWAFGRVFCNIWAAVDVLCCTASIMGLCIISIDRYIGVSYPLRYPTIVTQRRGVRALLCVWVLSLVISIGPLFGWRQPAPEDETICQINEEPGYVLFSALGSFYVPLAIILVMYCRVYVVAKRESRGLKSGLKTDKSDSEQVTLRIHRKNVPAEGGGVSSAKNKTHFSVRLLKFSREKKAAKTLGIVVGCFVLCWLPFFLVMPIGSFFPDFKPSETVFKIVFWLGYLNSCINPIIYPCSSQEFKKAFQNVLRIQCLRRRQSSKHALGYTLHPPSQALEGQHRDMVRIPVGSGETFYKISKTDGVCEWKFFSSMPQGSARITVPKDQSACTTARVRSKSFLQVCCCVGSSAPRPEENHQVPTIKIHTISLGENGEEV.

Over 1-27 (MVLLSENASEGSNCTHPPAPVNISKAI) the chain is Extracellular. Asn-7, Asn-13, and Asn-22 each carry an N-linked (GlcNAc...) asparagine glycan. A helical transmembrane segment spans residues 28 to 51 (LLGVILGGLIIFGVLGNILVILSV). The Cytoplasmic segment spans residues 52–64 (ACHRHLHSVTHYY). Residues 65–88 (IVNLAVADLLLTSTVLPFSAIFEI) traverse the membrane as a helical segment. At 89–99 (LGYWAFGRVFC) the chain is on the extracellular side. Cys-99 and Cys-176 are disulfide-bonded. A helical transmembrane segment spans residues 100-122 (NIWAAVDVLCCTASIMGLCIISI). The Cytoplasmic portion of the chain corresponds to 123 to 143 (DRYIGVSYPLRYPTIVTQRRG). The helical transmembrane segment at 144–167 (VRALLCVWVLSLVISIGPLFGWRQ) threads the bilayer. Residues 168–181 (PAPEDETICQINEE) lie on the Extracellular side of the membrane. The chain crosses the membrane as a helical span at residues 182–205 (PGYVLFSALGSFYVPLAIILVMYC). Topologically, residues 206–273 (RVYVVAKRES…FSREKKAAKT (68 aa)) are cytoplasmic. Position 215 is a phosphoserine; by PKA (Ser-215). Residues 274-297 (LGIVVGCFVLCWLPFFLVMPIGSF) form a helical membrane-spanning segment. Residues 298–305 (FPDFKPSE) are Extracellular-facing. The chain crosses the membrane as a helical span at residues 306-329 (TVFKIVFWLGYLNSCINPIIYPCS). Over 330-466 (SQEFKKAFQN…ISLGENGEEV (137 aa)) the chain is Cytoplasmic. The Nuclear localization signal motif lies at 334 to 349 (KKAFQNVLRIQCLRRR). The S-palmitoyl cysteine moiety is linked to residue Cys-345.

This sequence belongs to the G-protein coupled receptor 1 family. Adrenergic receptor subfamily. ADRA1A sub-subfamily. As to quaternary structure, homo- and heterooligomer. Heterooligomerizes with ADRA1B homooligomers in cardiac myocytes. Interacts with CAVIN4. C-terminal Ser or Thr residues may be phosphorylated. As to expression, abundant in heart, brain, aorta, vena cava, vas deferens, submaxillary gland, lung, and kidney. Found at lower levels in prostate, parotid gland and skeletal muscle.

The protein resides in the nucleus membrane. It localises to the cell membrane. Its subcellular location is the cytoplasm. The protein localises to the membrane. It is found in the caveola. This alpha-adrenergic receptor mediates its action by association with G proteins that activate a phosphatidylinositol-calcium second messenger system. Its effect is mediated by G(q) and G(11) proteins. Nuclear ADRA1A-ADRA1B heterooligomers regulate phenylephrine (PE)-stimulated ERK signaling in cardiac myocytes. This is Alpha-1A adrenergic receptor (Adra1a) from Rattus norvegicus (Rat).